The primary structure comprises 340 residues: Ketol-acid reductoisomerase (NADP(+)) (340 aa).

The 181-residue stretch at 2 to 182 (ANIYYENHAD…GCTRAGVIET (181 aa)) folds into the KARI N-terminal Rossmann domain. NADP(+) is bound by residues 25 to 28 (FGSQ), serine 51, serine 53, and 83 to 86 (DTAQ). Histidine 108 is a catalytic residue. Residue glycine 134 coordinates NADP(+). The KARI C-terminal knotted domain maps to 183-328 (TFAEETETDL…RELRRMMPFV (146 aa)). Residues aspartate 191, glutamate 195, glutamate 227, and glutamate 231 each coordinate Mg(2+). Serine 252 provides a ligand contact to substrate.

The protein belongs to the ketol-acid reductoisomerase family. It depends on Mg(2+) as a cofactor.

The catalysed reaction is (2R)-2,3-dihydroxy-3-methylbutanoate + NADP(+) = (2S)-2-acetolactate + NADPH + H(+). The enzyme catalyses (2R,3R)-2,3-dihydroxy-3-methylpentanoate + NADP(+) = (S)-2-ethyl-2-hydroxy-3-oxobutanoate + NADPH + H(+). It functions in the pathway amino-acid biosynthesis; L-isoleucine biosynthesis; L-isoleucine from 2-oxobutanoate: step 2/4. The protein operates within amino-acid biosynthesis; L-valine biosynthesis; L-valine from pyruvate: step 2/4. In terms of biological role, involved in the biosynthesis of branched-chain amino acids (BCAA). Catalyzes an alkyl-migration followed by a ketol-acid reduction of (S)-2-acetolactate (S2AL) to yield (R)-2,3-dihydroxy-isovalerate. In the isomerase reaction, S2AL is rearranged via a Mg-dependent methyl migration to produce 3-hydroxy-3-methyl-2-ketobutyrate (HMKB). In the reductase reaction, this 2-ketoacid undergoes a metal-dependent reduction by NADPH to yield (R)-2,3-dihydroxy-isovalerate. The chain is Ketol-acid reductoisomerase (NADP(+)) from Roseiflexus castenholzii (strain DSM 13941 / HLO8).